Reading from the N-terminus, the 272-residue chain is Acetylglutamate kinase (272 aa).

Substrate is bound by residues glycine 46–alanine 47, arginine 68, and asparagine 166.

It belongs to the acetylglutamate kinase family. ArgB subfamily.

Its subcellular location is the cytoplasm. It catalyses the reaction N-acetyl-L-glutamate + ATP = N-acetyl-L-glutamyl 5-phosphate + ADP. The protein operates within amino-acid biosynthesis; L-arginine biosynthesis; N(2)-acetyl-L-ornithine from L-glutamate: step 2/4. Catalyzes the ATP-dependent phosphorylation of N-acetyl-L-glutamate. The polypeptide is Acetylglutamate kinase (Dehalococcoides mccartyi (strain ATCC BAA-2266 / KCTC 15142 / 195) (Dehalococcoides ethenogenes (strain 195))).